A 100-amino-acid polypeptide reads, in one-letter code: Small ribosomal subunit protein uS14c (100 aa).

The protein belongs to the universal ribosomal protein uS14 family. As to quaternary structure, part of the 30S ribosomal subunit.

The protein localises to the plastid. It localises to the chloroplast. Functionally, binds 16S rRNA, required for the assembly of 30S particles. The protein is Small ribosomal subunit protein uS14c of Buxus microphylla (Littleleaf boxwood).